We begin with the raw amino-acid sequence, 317 residues long: tRNA-dihydrouridine(16) synthase (317 aa).

FMN-binding positions include 7 to 9 and Gln-68; that span reads PME. The active-site Proton donor is the Cys-98. Residues Lys-139, 199 to 201, and 223 to 224 each bind FMN; these read NGE and GR.

It belongs to the Dus family. DusC subfamily. It depends on FMN as a cofactor.

The enzyme catalyses 5,6-dihydrouridine(16) in tRNA + NADP(+) = uridine(16) in tRNA + NADPH + H(+). It carries out the reaction 5,6-dihydrouridine(16) in tRNA + NAD(+) = uridine(16) in tRNA + NADH + H(+). Catalyzes the synthesis of 5,6-dihydrouridine (D), a modified base found in the D-loop of most tRNAs, via the reduction of the C5-C6 double bond in target uridines. Specifically modifies U16 in tRNAs. The chain is tRNA-dihydrouridine(16) synthase from Pseudomonas syringae pv. tomato (strain ATCC BAA-871 / DC3000).